Consider the following 373-residue polypeptide: Alpha-N-acetylgalactosaminide alpha-2,6-sialyltransferase 2 (373 aa).

Residues 1 to 6 lie on the Cytoplasmic side of the membrane; the sequence is MDLPRR. The chain crosses the membrane as a helical; Signal-anchor for type II membrane protein span at residues 7 to 27; that stretch reads WLFRMLLLVATSSGILLMLYS. Over 28–373 the chain is Lumenal; it reads SAGQQSPETQ…NAGILWLYQR (346 aa). Intrachain disulfides connect cysteine 65/cysteine 147 and cysteine 150/cysteine 316. Asparagine 103 is a glycosylation site (N-linked (GlcNAc...) asparagine). Asparagine 155 contributes to the CMP-N-acetyl-beta-neuraminate binding site. The N-linked (GlcNAc...) asparagine glycan is linked to asparagine 160. 3 residues coordinate CMP-N-acetyl-beta-neuraminate: asparagine 178, serine 303, and histidine 335.

Belongs to the glycosyltransferase 29 family. As to expression, highly expressed in lactating mammary gland and adult testis. Lower levels in kidney.

The protein localises to the golgi apparatus membrane. The catalysed reaction is a beta-D-galactosyl-(1-&gt;3)-N-acetyl-alpha-D-galactosaminyl derivative + CMP-N-acetyl-beta-neuraminate = a beta-D-galactosyl-(1-&gt;3)-[N-acetyl-alpha-neuraminyl-(2-&gt;6)]-N-acetyl-alpha-D-galactosaminyl derivative + CMP + H(+). It catalyses the reaction a 3-O-[N-acetyl-alpha-D-galactosaminyl]-L-threonyl-[protein] + CMP-N-acetyl-beta-neuraminate = a 3-O-[N-acetyl-alpha-neuraminosyl-(2-&gt;6)-N-acetyl-alpha-D-galactosaminyl]-L-threonyl-[protein] + CMP + H(+). It carries out the reaction a 3-O-[N-acetyl-alpha-neuraminyl-(2-&gt;3)-beta-D-galactosyl-(1-&gt;3)-N-acetyl-alpha-D-galactosaminyl]-L-threonyl-[protein] + CMP-N-acetyl-beta-neuraminate = a 3-O-{alpha-Neu5Ac-(2-&gt;3)-beta-D-Gal-(1-&gt;3)-[alpha-Neu5Ac-(2-&gt;6)]-alpha-D-GalNAc}-L-threonyl-[protein] + CMP + H(+). Its pathway is protein modification; protein glycosylation. Functionally, catalyzes the transfer of N-acetylneuraminyl groups onto glycan chains in glycoproteins. Conjugates sialic acid with an alpha-2-6 linkage to N-acetylgalactosamine (GalNAc) glycan chains linked to serine or threonine in glycoproteins. Sialylates alphaGalNAc- and Galbeta1-&gt;3GalNAc-O-Ser/Thr epitopes also known as Tn and T antigens. The sequence is that of Alpha-N-acetylgalactosaminide alpha-2,6-sialyltransferase 2 (St6galnac2) from Mus musculus (Mouse).